Here is a 113-residue protein sequence, read N- to C-terminus: Endoribonuclease SymE (113 aa).

The region spanning 29-74 (SRYPDYSRIPAITLKGQWLEAAGFATGTAVVVKVMEGCIVLTAQPA) is the SpoVT-AbrB domain.

This sequence belongs to the SymE family.

It localises to the cytoplasm. Functionally, involved in the degradation and recycling of damaged RNA. It is itself a target for degradation by the ATP-dependent protease Lon. The protein is Endoribonuclease SymE of Escherichia coli (strain ATCC 8739 / DSM 1576 / NBRC 3972 / NCIMB 8545 / WDCM 00012 / Crooks).